A 472-amino-acid chain; its full sequence is ATP-dependent rRNA helicase rrp3 (472 aa).

Positions 1–52 (MPAIKKRKIAREAPQQEDHSDSEAHSSASEDAAPNTTEQEQEPSEAPKQAPK) are disordered. A compositionally biased stretch (basic and acidic residues) spans 10–24 (AREAPQQEDHSDSEA). A Q motif motif is present at residues 52-80 (KSFKELGLIEQLCEACDSMGYKAPTAIQA). The region spanning 83–254 (IPLALQGRDL…RASLQNPLRV (172 aa)) is the Helicase ATP-binding domain. Residue 96-103 (AETGSGKT) coordinates ATP. The DEAD box signature appears at 202-205 (DEAD). Residues 282–426 (YLVYLLNEFV…EYPAEKDEVM (145 aa)) enclose the Helicase C-terminal domain. The interval 443 to 472 (MKNYDEKKGSRGKKFAKGKRSREDMDQEEG) is disordered. The segment covering 452–462 (SRGKKFAKGKR) has biased composition (basic residues).

The protein belongs to the DEAD box helicase family. DDX47/RRP3 subfamily. As to quaternary structure, interacts with the SSU processome.

The protein localises to the nucleus. The catalysed reaction is ATP + H2O = ADP + phosphate + H(+). ATP-dependent rRNA helicase required for pre-ribosomal RNA processing. Involved in the maturation of the 35S-pre-rRNA and to its cleavage to mature 18S rRNA. This chain is ATP-dependent rRNA helicase rrp3, found in Aspergillus oryzae (strain ATCC 42149 / RIB 40) (Yellow koji mold).